Reading from the N-terminus, the 185-residue chain is Ribosome-recycling factor (185 aa).

Belongs to the RRF family.

The protein localises to the cytoplasm. Functionally, responsible for the release of ribosomes from messenger RNA at the termination of protein biosynthesis. May increase the efficiency of translation by recycling ribosomes from one round of translation to another. The sequence is that of Ribosome-recycling factor from Pseudothermotoga lettingae (strain ATCC BAA-301 / DSM 14385 / NBRC 107922 / TMO) (Thermotoga lettingae).